Here is a 281-residue protein sequence, read N- to C-terminus: Undecaprenyl-diphosphatase (281 aa).

A run of 8 helical transmembrane segments spans residues 5–25 (LFVL…FLPI), 48–68 (VKMY…LLYW), 92–112 (FWFM…LLDA), 118–138 (LMTP…MIYA), 154–174 (VTPK…IPGM), 192–212 (VVAA…YSLL), 226–246 (AELI…VAVI), and 261–281 (FAIY…MGFF).

This sequence belongs to the UppP family.

It is found in the cell membrane. It carries out the reaction di-trans,octa-cis-undecaprenyl diphosphate + H2O = di-trans,octa-cis-undecaprenyl phosphate + phosphate + H(+). Catalyzes the dephosphorylation of undecaprenyl diphosphate (UPP). Confers resistance to bacitracin. The polypeptide is Undecaprenyl-diphosphatase (Ruminiclostridium cellulolyticum (strain ATCC 35319 / DSM 5812 / JCM 6584 / H10) (Clostridium cellulolyticum)).